The sequence spans 435 residues: Nucleoredoxin (435 aa).

An N-acetylserine modification is found at Ser2. Positions 167–321 (PKPFREVIAG…VLELSDSNAA (155 aa)) constitute a Thioredoxin domain.

This sequence belongs to the nucleoredoxin family. As to quaternary structure, associates with the phosphatase 2A holoenzyme. Interacts with PPP2CA; the interaction is direct. Interacts with DVL1 (via PDZ domain); the interaction is direct and regulated by oxidative stress.

The protein resides in the cytoplasm. Its subcellular location is the cytosol. The protein localises to the nucleus. It carries out the reaction [protein]-dithiol + NAD(+) = [protein]-disulfide + NADH + H(+). The enzyme catalyses [protein]-dithiol + NADP(+) = [protein]-disulfide + NADPH + H(+). Its function is as follows. Functions as a redox-dependent negative regulator of the Wnt signaling pathway, possibly by preventing ubiquitination of DVL3 by the BCR(KLHL12) complex. May also function as a transcriptional regulator act as a regulator of protein phosphatase 2A (PP2A). The sequence is that of Nucleoredoxin (NXN) from Homo sapiens (Human).